Here is a 1380-residue protein sequence, read N- to C-terminus: Receptor-type adenylate cyclase A (1380 aa).

At M1 to V34 the chain is on the cytoplasmic side. Residues F35 to I55 form a helical membrane-spanning segment. Residues T56 to N891 are Extracellular-facing. Residues N422, N478, N497, and N567 are each glycosylated (N-linked (GlcNAc...) asparagine). Residues G892–L912 traverse the membrane as a helical segment. Topologically, residues Y913–E1380 are cytoplasmic. Residues T933–E1087 form the Guanylate cyclase domain. Residues D938 and D981 each contribute to the Mg(2+) site. The tract at residues L1270–S1298 is disordered.

The protein belongs to the adenylyl cyclase class-3 family. Mg(2+) is required as a cofactor.

The protein localises to the membrane. The enzyme catalyses ATP = 3',5'-cyclic AMP + diphosphate. Could act as a receptor for an unknown ligand. The sequence is that of Receptor-type adenylate cyclase A (RAC-A) from Leishmania donovani.